A 1258-amino-acid polypeptide reads, in one-letter code: uncharacterized protein (1258 aa).

The WD 1 repeat unit spans residues 55–93 (ELASEILGVCWQENGVLAAGISEGTWKRFLAGKQAINAE). The span at 112–128 (GGRTKERKDTGTSRQEK) shows a compositional bias: basic and acidic residues. The tract at residues 112-138 (GGRTKERKDTGTSRQEKFLSSSHPHTD) is disordered. WD repeat units follow at residues 640-679 (ETLGNILSAAFSPEGQLLATCDTDCHVRVWEVKSGKLLLI), 682-721 (GHSNWVRFVVFSPDGEILASCGADENVKLWSVRDGVCIKT), 724-763 (GHEHEVFSVAFHPDGETLASASGDKTIKLWDIQDGTCLQT), 766-807 (GHTD…RTLK), 809-849 (HTGW…KTYI), 850-889 (GHTNSVYSIAYSPDSKILVSGSGDRTIKLWDCQTHICIKT), 892-931 (GHTNEVCSVAFSPDGQTLACVSLDQSVRLWNCRTGQCLKA), 934-975 (GNTD…SSLE), 976-1017 (GHTD…QILL), 1019-1059 (HTDW…KTLS), 1060-1101 (EHSD…GILR), 1103-1143 (HSNR…KTLT), 1144-1183 (GHTNWVFDIAFSPDGKILASASHDQTVRIWDVNTGKCHHI), and 1186-1227 (GHTH…QILR).

This is an uncharacterized protein from Nostoc sp. (strain PCC 7120 / SAG 25.82 / UTEX 2576).